The following is a 210-amino-acid chain: Cdc42 effector protein 2 (210 aa).

Serine 2 bears the N-acetylserine mark. The CRIB domain occupies 30 to 44 (ISPPLGDFRHTIHIG). 3 positions are modified to phosphoserine: serine 31, serine 101, and serine 141. Positions 124–145 (AQAPPKPPRLHLETPQASPQEA) are disordered.

It belongs to the BORG/CEP family. As to quaternary structure, interacts with CDC42 and RHOQ, in a GTP-dependent manner, and with SEPT7.

It is found in the endomembrane system. The protein localises to the cytoplasm. Its subcellular location is the cytoskeleton. Functionally, probably involved in the organization of the actin cytoskeleton. May act downstream of CDC42 to induce actin filament assembly leading to cell shape changes. Induces pseudopodia formation in fibroblasts in a CDC42-dependent manner. The chain is Cdc42 effector protein 2 (CDC42EP2) from Bos taurus (Bovine).